Reading from the N-terminus, the 549-residue chain is Glucose-6-phosphate isomerase (549 aa).

E355 functions as the Proton donor in the catalytic mechanism. Active-site residues include H386 and K514.

This sequence belongs to the GPI family.

The protein resides in the cytoplasm. The enzyme catalyses alpha-D-glucose 6-phosphate = beta-D-fructose 6-phosphate. The protein operates within carbohydrate biosynthesis; gluconeogenesis. Its pathway is carbohydrate degradation; glycolysis; D-glyceraldehyde 3-phosphate and glycerone phosphate from D-glucose: step 2/4. Its function is as follows. Catalyzes the reversible isomerization of glucose-6-phosphate to fructose-6-phosphate. In Salmonella paratyphi A (strain AKU_12601), this protein is Glucose-6-phosphate isomerase.